Consider the following 685-residue polypeptide: MAKKINNEYNDASIQVLEGLEAVRKRPGMYIGSTDSRGLHHLVYEIVDNAVDEALSGYGNEINVTIQKDNSICVADSGRGMPTGMHASGIPTVEVIFTVLHAGGKFGQGGYKTSGGLHGVGASVVNALSKWLEVHIVRDGVEYMERFEDGGKPVGTLKKIGKTKKRNGTSVTFLPDDTIFSTTNFSYEILAERLRESAFLLKGVKITLTDERGEEPKEEVFHYEEGIKEFVAYLNEEKDTLTPVVYFSGAKEGIEVELAYQYNDGYSENVLSFVNNVRTKDGGTHEVGMKTSMTKAYNEYARKVGLLKEKDKNLEGSDFREGLAAVLSIRVPENLLQFEGQTKGKLGTPLARTVVDNVVGEQMGFYLQENSEMSQSLIRKAIKAREAREAARKAREESRNGKKRKKGESLLSGKLTPAQSRNPKKNELYLVEGDSAGGSAKQGRDRKFQAILPLRGKVINTEKAKMQDILKNEEINTMIYTIGAGVGPEFSIEDCNYDKIIIMTDADTDGAHIQVLLLTFFYRYMKPLIEAGKVYIALPPLYKVSKGTGKKSVIEYAWTDGELAEVIDKVGKGYMLQRYKGLGEMNAEQLWETTMDPETRTLIRVRIDDAAQAERRVTTLMGDKVEPRRKWIEQHVQFTLEEDGSILDRSEEDTSAPTGESLLDAEKTKEAEQTDDTEISLFDIE.

Basic and acidic residues predominate over residues Glu389–Asn400. Positions Glu389–Glu427 are disordered. One can recognise a Toprim domain in the interval Asn426–Pro540. Mg(2+)-binding residues include Glu432, Asp505, and Asp507. 2 stretches are compositionally biased toward acidic residues: residues Gly644–Thr654 and Gln673–Glu685. The segment at Gly644–Glu685 is disordered.

The protein belongs to the type II topoisomerase family. ParE type 1 subfamily. Heterotetramer composed of ParC and ParE. Mg(2+) is required as a cofactor. It depends on Mn(2+) as a cofactor. The cofactor is Ca(2+).

The enzyme catalyses ATP-dependent breakage, passage and rejoining of double-stranded DNA.. With respect to regulation, pyrrolopyrimidines inhibit both GyrB and its paralog in topoisomerase IV (parE). Topoisomerase IV is essential for chromosome segregation. It relaxes supercoiled DNA. Performs the decatenation events required during the replication of a circular DNA molecule. In Enterococcus faecalis (strain ATCC 700802 / V583), this protein is DNA topoisomerase 4 subunit B.